Consider the following 65-residue polypeptide: MPKIKTNRGAAKRFKPTGSGGFKRAQSHRRHILTKKSTKRKRHLRSTGMIAECDKASVRQMLPHV.

The tract at residues 1-46 (MPKIKTNRGAAKRFKPTGSGGFKRAQSHRRHILTKKSTKRKRHLRS) is disordered. Basic residues predominate over residues 25 to 45 (AQSHRRHILTKKSTKRKRHLR).

Belongs to the bacterial ribosomal protein bL35 family.

In Thioalkalivibrio sulfidiphilus (strain HL-EbGR7), this protein is Large ribosomal subunit protein bL35.